The sequence spans 575 residues: Homocysteine/cysteine synthase (575 aa).

At Lys-376 the chain carries N6-(pyridoxal phosphate)lysine.

Belongs to the trans-sulfuration enzymes family. MET7 subfamily. It depends on pyridoxal 5'-phosphate as a cofactor.

The protein resides in the cytoplasm. The catalysed reaction is O-acetyl-L-homoserine + methanethiol = L-methionine + acetate + H(+). It carries out the reaction O-acetyl-L-homoserine + hydrogen sulfide = L-homocysteine + acetate. The enzyme catalyses O-acetyl-L-serine + hydrogen sulfide = L-cysteine + acetate. It participates in amino-acid biosynthesis; L-methionine biosynthesis via de novo pathway; L-homocysteine from O-acetyl-L-homoserine. Functionally, plays a role in inorganic sulfur assimilation during sulfur-limited conditions; catalyzes the conversion of O-acetyl-L-homoserine (OAH) into homocysteine in the methionine biosynthesis pathway. Also catalyzes the conversion of O-acetylserine (OAS) into cysteine, the last step in the cysteine biosynthesis pathway. However, it seems that in S.cerevisiae cysteine biosynthesis occurs exclusively through the cystathionine pathway and not via direct incorporation of sulfur into OAS. It therefore has no metabolic role in cysteine biosynthesis and may only have a regulatory role controlling OAS levels. The protein is Homocysteine/cysteine synthase of Saccharomyces cerevisiae (strain ATCC 204508 / S288c) (Baker's yeast).